Reading from the N-terminus, the 349-residue chain is Protein RecA (349 aa).

65–72 contributes to the ATP binding site; it reads GPESSGKT.

It belongs to the RecA family.

It localises to the cytoplasm. Its function is as follows. Can catalyze the hydrolysis of ATP in the presence of single-stranded DNA, the ATP-dependent uptake of single-stranded DNA by duplex DNA, and the ATP-dependent hybridization of homologous single-stranded DNAs. It interacts with LexA causing its activation and leading to its autocatalytic cleavage. This chain is Protein RecA, found in Enterococcus faecium (Streptococcus faecium).